The sequence spans 158 residues: Lipoprotein signal peptidase (158 aa).

The next 4 membrane-spanning stretches (helical) occupy residues 7 to 27 (LFWIAAFIAFFLDQITKYWVV), 38 to 58 (LLTGIFHFTYVTNTGAAFSLL), 68 to 88 (LSLGVSLVLIALALFGPTLNL), and 92 to 112 (LGYGLILGGAMGNGIDRFVLG). Residues aspartate 116 and aspartate 132 contribute to the active site. Residues 125–145 (FPVFNVADSFISIGIVFLLIA) traverse the membrane as a helical segment.

Belongs to the peptidase A8 family.

The protein localises to the cell inner membrane. The enzyme catalyses Release of signal peptides from bacterial membrane prolipoproteins. Hydrolyzes -Xaa-Yaa-Zaa-|-(S,diacylglyceryl)Cys-, in which Xaa is hydrophobic (preferably Leu), and Yaa (Ala or Ser) and Zaa (Gly or Ala) have small, neutral side chains.. The protein operates within protein modification; lipoprotein biosynthesis (signal peptide cleavage). Its function is as follows. This protein specifically catalyzes the removal of signal peptides from prolipoproteins. In Nostoc punctiforme (strain ATCC 29133 / PCC 73102), this protein is Lipoprotein signal peptidase.